We begin with the raw amino-acid sequence, 340 residues long: Glutamine synthetase (340 aa).

The 80-residue stretch at 3-82 (IKAEYIWIDG…LCEVLHTDLT (80 aa)) folds into the GS beta-grasp domain. Residues 88–340 (TRALLRPVAE…CTELARREQI (253 aa)) enclose the GS catalytic domain. Glu-109, Glu-111, Glu-171, and Glu-178 together coordinate Mg(2+). Glu-276 provides a ligand contact to L-glutamate.

It belongs to the glutamine synthetase family. Homooctamer and homotetramer. The cofactor is Mg(2+).

The protein localises to the cytoplasm. It carries out the reaction L-glutamate + NH4(+) + ATP = L-glutamine + ADP + phosphate + H(+). In terms of biological role, catalyzes the ATP-dependent biosynthesis of glutamine from glutamate and ammonia. The sequence is that of Glutamine synthetase from Streptomyces hygroscopicus.